The primary structure comprises 459 residues: GTPase Der (459 aa).

EngA-type G domains follow at residues 3 to 167 (FTFA…PEPE) and 188 to 363 (IRVA…AVWN). GTP-binding positions include 9–16 (GRPNVGKS), 56–60 (DTAGL), 119–122 (NKSE), 194–201 (GRPNAGKS), 241–245 (DTAGL), and 306–309 (NKWD). The 85-residue stretch at 364-448 (TRVSTAALNR…PVRITLREKA (85 aa)) folds into the KH-like domain.

This sequence belongs to the TRAFAC class TrmE-Era-EngA-EngB-Septin-like GTPase superfamily. EngA (Der) GTPase family. Associates with the 50S ribosomal subunit.

Functionally, GTPase that plays an essential role in the late steps of ribosome biogenesis. This chain is GTPase Der, found in Rhodopseudomonas palustris (strain HaA2).